Here is a 746-residue protein sequence, read N- to C-terminus: Rhizobactin receptor (746 aa).

The signal sequence occupies residues 1–26 (MGNNENGGISFCVFVVVIGFGTGAVA). The TonB box signature appears at 40-47 (EEIVVTGG). Residues 52–163 (QISEIARTIY…TGGIINIITK (112 aa)) enclose the TBDR plug domain. Residues 169–746 (EPGLHAEVTG…TFAVSLTKVF (578 aa)) form the TBDR beta-barrel domain. The TonB C-terminal box motif lies at 729–746 (FDYKGRGRTFAVSLTKVF).

Belongs to the TonB-dependent receptor family.

The protein localises to the cell outer membrane. Functionally, receptor for the siderophore rhizobactin. The polypeptide is Rhizobactin receptor (rhtA) (Rhizobium meliloti (strain 1021) (Ensifer meliloti)).